The primary structure comprises 439 residues: Glutamate--tRNA ligase 2 (439 aa).

A 'HIGH' region motif is present at residues 9–19 (PSPTGHLHVGN). Residues 233–237 (KLSKR) carry the 'KMSKS' region motif. K236 is a binding site for ATP.

This sequence belongs to the class-I aminoacyl-tRNA synthetase family. Glutamate--tRNA ligase type 1 subfamily. Monomer.

It localises to the cytoplasm. It carries out the reaction tRNA(Glu) + L-glutamate + ATP = L-glutamyl-tRNA(Glu) + AMP + diphosphate. Catalyzes the attachment of glutamate to tRNA(Glu) in a two-step reaction: glutamate is first activated by ATP to form Glu-AMP and then transferred to the acceptor end of tRNA(Glu). This chain is Glutamate--tRNA ligase 2, found in Sphingopyxis alaskensis (strain DSM 13593 / LMG 18877 / RB2256) (Sphingomonas alaskensis).